The sequence spans 684 residues: Phenoloxidase 2 (684 aa).

The propeptide at 1–51 (MSNTAVLNDLVALYDRPTEPMFRVKAKKSFKVPKEYVTDRFKNVAVEISNR) is removed by PPAF1. N-linked (GlcNAc...) asparagine glycosylation is found at asparagine 81 and asparagine 91. 3 residues coordinate Cu cation: histidine 209, histidine 213, and histidine 238. N-linked (GlcNAc...) asparagine glycosylation occurs at asparagine 330. Residue glutamate 350 is the Proton acceptor of the active site. Cu cation is bound by residues histidine 365, histidine 369, and histidine 405. Asparagine 416, asparagine 487, asparagine 491, and asparagine 546 each carry an N-linked (GlcNAc...) asparagine glycan. 2 cysteine pairs are disulfide-bonded: cysteine 581/cysteine 623 and cysteine 583/cysteine 630.

Belongs to the tyrosinase family. Dimer. Might form a homodimer or a heterodimer with PPO1. Might interact with PPAF2 (via CLIP domain); the interaction might be required for PPO2 activity. It depends on Cu(2+) as a cofactor. Precursor cleaved by PPAF1. In terms of tissue distribution, hemocytes.

Its subcellular location is the secreted. In terms of biological role, this is a copper-containing oxidase that functions in the formation of pigments such as melanins and other polyphenolic compounds. Catalyzes the oxidation of o-diphenols (N-acetyldopamine, 4-methylcatechol and dopamine). Cannot oxidize monophenols and p-phenols (L-tyrosine, tyramine, gentisic acid and hydroquinone). Binds to the surface of hemocytes and is involved in hemocyte melanization. Activation of the enzyme in response to bacterial lipopolysaccharides (LPS) suggests it may play a role in innate immunity. The protein is Phenoloxidase 2 of Holotrichia diomphalia (Korean black chafer).